The sequence spans 210 residues: Large ribosomal subunit protein uL4 (210 aa).

The span at 41 to 52 (MNNARQGTASSK) shows a compositional bias: polar residues. Positions 41-80 (MNNARQGTASSKTRSEVRGGGRKPWRQKGTGRARAGSSRS) are disordered. The span at 60–71 (GGRKPWRQKGTG) shows a compositional bias: basic residues.

Belongs to the universal ribosomal protein uL4 family. In terms of assembly, part of the 50S ribosomal subunit.

Its function is as follows. One of the primary rRNA binding proteins, this protein initially binds near the 5'-end of the 23S rRNA. It is important during the early stages of 50S assembly. It makes multiple contacts with different domains of the 23S rRNA in the assembled 50S subunit and ribosome. Forms part of the polypeptide exit tunnel. This Acaryochloris marina (strain MBIC 11017) protein is Large ribosomal subunit protein uL4.